The chain runs to 207 residues: Thiamine-phosphate synthase (207 aa).

4-amino-2-methyl-5-(diphosphooxymethyl)pyrimidine-binding positions include 38 to 42 (QYRAK) and asparagine 70. Mg(2+) is bound by residues aspartate 71 and aspartate 90. Threonine 109 serves as a coordination point for 4-amino-2-methyl-5-(diphosphooxymethyl)pyrimidine. Residue 135-137 (TNS) coordinates 2-[(2R,5Z)-2-carboxy-4-methylthiazol-5(2H)-ylidene]ethyl phosphate. A 4-amino-2-methyl-5-(diphosphooxymethyl)pyrimidine-binding site is contributed by lysine 138. Residues glycine 165 and 185–186 (IS) each bind 2-[(2R,5Z)-2-carboxy-4-methylthiazol-5(2H)-ylidene]ethyl phosphate.

This sequence belongs to the thiamine-phosphate synthase family. Requires Mg(2+) as cofactor.

It carries out the reaction 2-[(2R,5Z)-2-carboxy-4-methylthiazol-5(2H)-ylidene]ethyl phosphate + 4-amino-2-methyl-5-(diphosphooxymethyl)pyrimidine + 2 H(+) = thiamine phosphate + CO2 + diphosphate. It catalyses the reaction 2-(2-carboxy-4-methylthiazol-5-yl)ethyl phosphate + 4-amino-2-methyl-5-(diphosphooxymethyl)pyrimidine + 2 H(+) = thiamine phosphate + CO2 + diphosphate. The catalysed reaction is 4-methyl-5-(2-phosphooxyethyl)-thiazole + 4-amino-2-methyl-5-(diphosphooxymethyl)pyrimidine + H(+) = thiamine phosphate + diphosphate. It functions in the pathway cofactor biosynthesis; thiamine diphosphate biosynthesis; thiamine phosphate from 4-amino-2-methyl-5-diphosphomethylpyrimidine and 4-methyl-5-(2-phosphoethyl)-thiazole: step 1/1. In terms of biological role, condenses 4-methyl-5-(beta-hydroxyethyl)thiazole monophosphate (THZ-P) and 2-methyl-4-amino-5-hydroxymethyl pyrimidine pyrophosphate (HMP-PP) to form thiamine monophosphate (TMP). The protein is Thiamine-phosphate synthase of Clostridium perfringens (strain 13 / Type A).